Here is a 435-residue protein sequence, read N- to C-terminus: MKTQVEHAVDGIITEQMATVAHDEDLSPEYIRTMVAEGKIVIPNNSNSTPKPVGIGKGLRTKVNASIGTSSDIVNYQAEVRKARIAEQAGADTLMELSVGGNLDRVRREVLAAVNLPVGNVPLYQAFCDATRKYGSADKLDPEELFDLIEQQCEDGLAFMAIHCGINRYTIERLRKQHYRYGGLVSKGGTSMVSWMEHNNRENPLYEQFDRVVAILKKYDVCLSLGNGLRAGAIHDSHDRAQMQELIINCELAQLGREMGCQMLVEGPGHMPLDEVEANILIQKRMSNEAPYYMLGPISTDVVPGFDHISSAIGAAQSARYGADLICYITPAEHLALPNEDDVRSGVEAARVATYIGDMNKYPDKGRQRDKAMSKARRDLQWDKQFELALMPEQARQVRDSRLPEEEHSCTMCGNFCAANGSKTLFDGDLQGDKC.

Residues M95, Y124, H163, 186-188, 227-230, and E266 contribute to the substrate site; these read SKG and NGLR. H270 provides a ligand contact to Zn(2+). Y293 serves as a coordination point for substrate. H334 is a binding site for Zn(2+). The [4Fe-4S] cluster site is built by C410, C413, and C417.

It belongs to the ThiC family. 5-hydroxybenzimidazole synthase subfamily. As to quaternary structure, homodimer. The cofactor is [4Fe-4S] cluster.

The enzyme catalyses 5-amino-1-(5-phospho-beta-D-ribosyl)imidazole + AH2 + S-adenosyl-L-methionine = 5-hydroxybenzimidazole + 5'-deoxyadenosine + formate + L-methionine + A + NH4(+) + phosphate + 2 H(+). It participates in cofactor biosynthesis; adenosylcobalamin biosynthesis. Its function is as follows. Catalyzes the complex conversion of aminoimidazole ribotide (AIR) to 5-hydroxybenzimidazole (5-HBI) in a radical S-adenosyl-L-methionine (SAM)-dependent reaction. Is thus involved in the anaerobic biosynthesis of dimethylbenzimidazole (DMB), the lower axial ligand of vitamin B12 (cobalamin). The chain is 5-hydroxybenzimidazole synthase from Desulfuromonas acetoxidans (strain DSM 684 / 11070).